The chain runs to 609 residues: Arginine--tRNA ligase (609 aa).

Residues 132 to 142 (ANPTSSLHVGH) carry the 'HIGH' region motif.

Belongs to the class-I aminoacyl-tRNA synthetase family. As to quaternary structure, monomer.

It is found in the cytoplasm. The enzyme catalyses tRNA(Arg) + L-arginine + ATP = L-arginyl-tRNA(Arg) + AMP + diphosphate. The protein is Arginine--tRNA ligase of Psychrobacter arcticus (strain DSM 17307 / VKM B-2377 / 273-4).